The sequence spans 133 residues: Large ribosomal subunit protein uL22 (133 aa).

It belongs to the universal ribosomal protein uL22 family. In terms of assembly, part of the 50S ribosomal subunit.

Functionally, this protein binds specifically to 23S rRNA; its binding is stimulated by other ribosomal proteins, e.g. L4, L17, and L20. It is important during the early stages of 50S assembly. It makes multiple contacts with different domains of the 23S rRNA in the assembled 50S subunit and ribosome. In terms of biological role, the globular domain of the protein is located near the polypeptide exit tunnel on the outside of the subunit, while an extended beta-hairpin is found that lines the wall of the exit tunnel in the center of the 70S ribosome. The protein is Large ribosomal subunit protein uL22 of Aquifex pyrophilus.